Here is a 425-residue protein sequence, read N- to C-terminus: Gamma-glutamyl phosphate reductase (425 aa).

Belongs to the gamma-glutamyl phosphate reductase family.

It is found in the cytoplasm. The catalysed reaction is L-glutamate 5-semialdehyde + phosphate + NADP(+) = L-glutamyl 5-phosphate + NADPH + H(+). It functions in the pathway amino-acid biosynthesis; L-proline biosynthesis; L-glutamate 5-semialdehyde from L-glutamate: step 2/2. Catalyzes the NADPH-dependent reduction of L-glutamate 5-phosphate into L-glutamate 5-semialdehyde and phosphate. The product spontaneously undergoes cyclization to form 1-pyrroline-5-carboxylate. The protein is Gamma-glutamyl phosphate reductase of Aromatoleum aromaticum (strain DSM 19018 / LMG 30748 / EbN1) (Azoarcus sp. (strain EbN1)).